A 205-amino-acid polypeptide reads, in one-letter code: tRNA (pseudouridine(54)-N(1))-methyltransferase (205 aa).

S-adenosyl-L-methionine-binding positions include Leu136, Gly156, Leu179–Leu184, and Cys189.

Belongs to the methyltransferase superfamily. TrmY family. As to quaternary structure, homodimer.

It localises to the cytoplasm. The catalysed reaction is pseudouridine(54) in tRNA + S-adenosyl-L-methionine = N(1)-methylpseudouridine(54) in tRNA + S-adenosyl-L-homocysteine + H(+). Functionally, specifically catalyzes the N1-methylation of pseudouridine at position 54 (Psi54) in tRNAs. The chain is tRNA (pseudouridine(54)-N(1))-methyltransferase from Methanocaldococcus jannaschii (strain ATCC 43067 / DSM 2661 / JAL-1 / JCM 10045 / NBRC 100440) (Methanococcus jannaschii).